We begin with the raw amino-acid sequence, 506 residues long: ATP synthase subunit alpha, chloroplastic (506 aa).

170 to 177 (GDRQTGKT) provides a ligand contact to ATP. T257 carries the phosphothreonine modification.

This sequence belongs to the ATPase alpha/beta chains family. As to quaternary structure, F-type ATPases have 2 components, CF(1) - the catalytic core - and CF(0) - the membrane proton channel. CF(1) has five subunits: alpha(3), beta(3), gamma(1), delta(1), epsilon(1). CF(0) has four main subunits: a, b, b' and c.

It localises to the plastid. Its subcellular location is the chloroplast thylakoid membrane. It carries out the reaction ATP + H2O + 4 H(+)(in) = ADP + phosphate + 5 H(+)(out). In terms of biological role, produces ATP from ADP in the presence of a proton gradient across the membrane. The alpha chain is a regulatory subunit. The sequence is that of ATP synthase subunit alpha, chloroplastic from Olimarabidopsis pumila (Dwarf rocket).